Here is an 80-residue protein sequence, read N- to C-terminus: Large ribosomal subunit protein bL31B (80 aa).

It belongs to the bacterial ribosomal protein bL31 family. Type B subfamily. As to quaternary structure, part of the 50S ribosomal subunit.

The polypeptide is Large ribosomal subunit protein bL31B (Streptococcus mutans serotype c (strain ATCC 700610 / UA159)).